The chain runs to 150 residues: Transcriptional repressor NrdR (150 aa).

A zinc finger spans residues C3–C34. The 91-residue stretch at L46–D136 folds into the ATP-cone domain.

It belongs to the NrdR family. Zn(2+) serves as cofactor.

Negatively regulates transcription of bacterial ribonucleotide reductase nrd genes and operons by binding to NrdR-boxes. In Corynebacterium glutamicum (strain ATCC 13032 / DSM 20300 / JCM 1318 / BCRC 11384 / CCUG 27702 / LMG 3730 / NBRC 12168 / NCIMB 10025 / NRRL B-2784 / 534), this protein is Transcriptional repressor NrdR.